The following is a 321-amino-acid chain: Glucokinase (321 aa).

8–13 (GDVGGT) is a binding site for ATP.

It belongs to the bacterial glucokinase family.

It localises to the cytoplasm. The catalysed reaction is D-glucose + ATP = D-glucose 6-phosphate + ADP + H(+). In Salmonella agona (strain SL483), this protein is Glucokinase.